A 314-amino-acid chain; its full sequence is Putative S-adenosyl-L-methionine-dependent methyltransferase MUL_4402 (314 aa).

S-adenosyl-L-methionine is bound by residues Asp-132 and 161 to 162 (DL). The tract at residues 291-314 (RPVPDDAEGPVPPTLFVSAHRPAA) is disordered.

It belongs to the UPF0677 family.

Functionally, exhibits S-adenosyl-L-methionine-dependent methyltransferase activity. This chain is Putative S-adenosyl-L-methionine-dependent methyltransferase MUL_4402, found in Mycobacterium ulcerans (strain Agy99).